The chain runs to 586 residues: Guanylate-binding protein 5 (586 aa).

The tract at residues Met-1 to Asp-306 is NLRP3-binding. Positions Met-1 to Cys-309 are GTPase domain (Globular). The GB1/RHD3-type G domain maps to Thr-35–Met-276. GTP-binding positions include Gly-45–Ser-52, Val-67–Ser-69, Arg-181–Asp-182, and Leu-245. The required for tetramerization, but not for dimerization stretch occupies residues Met-529 to Leu-586. Cys-583 bears the Cysteine methyl ester mark. Residue Cys-583 is the site of S-geranylgeranyl cysteine attachment. A propeptide spans Val-584–Leu-586 (removed in mature form).

It belongs to the TRAFAC class dynamin-like GTPase superfamily. GB1/RHD3 GTPase family. GB1 subfamily. As to quaternary structure, homodimer; homodimerizes upon GTP-binding, forming a close face-to-face dimer. Heterodimer with other family members, including GBP1, GBP2, GBP3 and GBP4. May also form tetramers (dimer of dimers) in the presence of GTP. Interacts with NLRP3, possibly in its tetrameric form, and promotes PYCARD/ASC polymerization. Homodimer; homodimerizes upon GTP-binding. GDP-bound form remains homodimeric. In terms of assembly, homodimer; homodimerizes upon GTP-binding. GDP-bound is monomeric. Isoprenylation is required for proper subcellular location. As to expression, expressed in peripheral blood monocytes (at protein level).

It localises to the cytoplasmic vesicle membrane. It is found in the golgi apparatus membrane. The protein localises to the cytoplasm. The catalysed reaction is GTP + H2O = GDP + phosphate + H(+). Functionally, interferon (IFN)-inducible GTPase that plays important roles in innate immunity against a diverse range of bacterial, viral and protozoan pathogens. Hydrolyzes GTP, but in contrast to other family members, does not produce GMP. Following infection, recruited to the pathogen-containing vacuoles or vacuole-escaped bacteria and acts as a positive regulator of inflammasome assembly by promoting the release of inflammasome ligands from bacteria. Acts by promoting lysis of pathogen-containing vacuoles, releasing pathogens into the cytosol. Following pathogen release in the cytosol, promotes recruitment of proteins that mediate bacterial cytolysis: this liberates ligands that are detected by inflammasomes, such as lipopolysaccharide (LPS) that activates the non-canonical CASP4/CASP11 inflammasome or double-stranded DNA (dsDNA) that activates the AIM2 inflammasome. As an activator of NLRP3 inflammasome assembly: promotes selective NLRP3 inflammasome assembly in response to microbial and soluble, but not crystalline, agents. Independently of its GTPase activity, acts as an inhibitor of various viruses infectivity, such as HIV-1, Zika and influenza A viruses, by inhibiting FURIN-mediated maturation of viral envelope proteins. In terms of biological role, antigenic tumor-specific truncated splice form. The sequence is that of Guanylate-binding protein 5 from Homo sapiens (Human).